The chain runs to 59 residues: Large ribosomal subunit protein bL32 (59 aa).

Residues 1-16 (MAVPKRKTSPSRRGMR) show a composition bias toward basic residues. The tract at residues 1-59 (MAVPKRKTSPSRRGMRRSADALKAPTYVEDKNSGELRRPHHIDLKSGMYRGRQVLEPKE) is disordered. The segment covering 28–44 (VEDKNSGELRRPHHIDL) has biased composition (basic and acidic residues).

This sequence belongs to the bacterial ribosomal protein bL32 family.

The polypeptide is Large ribosomal subunit protein bL32 (Brucella abortus (strain S19)).